A 173-amino-acid polypeptide reads, in one-letter code: RNA silencing suppressor p19 (173 aa).

Residues M1–G21 are compositionally biased toward basic and acidic residues. A disordered region spans residues M1–D34.

Belongs to the tombusvirus protein p19 family. In terms of assembly, homodimer.

Its function is as follows. Viral suppressor of RNA silencing which binds specifically to silencing RNAs (siRNAs). Acts as a molecular caliper to specifically select siRNAs based on the length of the duplex region of the RNA. This is RNA silencing suppressor p19 from Cucumis sativus (Cucumber).